Reading from the N-terminus, the 260-residue chain is Voltage-dependent calcium channel gamma-6 subunit (260 aa).

Helical transmembrane passes span 43–63, 143–163, 169–189, and 221–241; these read LLVA…EFWV, VIAV…IMVL, SLLR…FVSL, and LGCG…FLLL.

The protein belongs to the PMP-22/EMP/MP20 family. CACNG subfamily. Interacts with CACNA1C. Identified in a complex with the L-type calcium channel subunits CACNA1C, CACNA2D1 and either CACNB1 or CACNB2. In terms of tissue distribution, detected in brain and heart (at protein level).

The protein resides in the cell membrane. In terms of biological role, regulates the activity of L-type calcium channels that contain CACNA1C as pore-forming subunit. The sequence is that of Voltage-dependent calcium channel gamma-6 subunit (Cacng6) from Mus musculus (Mouse).